The chain runs to 193 residues: Ion-translocating oxidoreductase complex subunit B (193 aa).

The segment at 1–26 (MSTMLIAVILLTLLALFFGVLLGFAA) is hydrophobic. The 4Fe-4S domain maps to 32-90 (EGNPIVDELEAILPQTQCGQCGYPGCRPYAEAIANGDKVNKCPPGGTATMEKLASLMGV). C49, C52, C57, C73, C114, C117, C120, C124, C144, C147, C150, and C154 together coordinate [4Fe-4S] cluster. 2 consecutive 4Fe-4S ferredoxin-type domains span residues 105–134 (KVAY…GAGK) and 136–164 (MHTV…MLPV).

This sequence belongs to the 4Fe4S bacterial-type ferredoxin family. RnfB subfamily. The complex is composed of six subunits: RnfA, RnfB, RnfC, RnfD, RnfE and RnfG. Requires [4Fe-4S] cluster as cofactor.

Its subcellular location is the cell inner membrane. Functionally, part of a membrane-bound complex that couples electron transfer with translocation of ions across the membrane. This chain is Ion-translocating oxidoreductase complex subunit B, found in Shewanella sp. (strain MR-4).